The following is a 197-amino-acid chain: Ribonuclease HII (197 aa).

Residues Lys-9 to Phe-197 form the RNase H type-2 domain. A divalent metal cation-binding residues include Asp-15, Glu-16, and Asp-107.

It belongs to the RNase HII family. It depends on Mn(2+) as a cofactor. Requires Mg(2+) as cofactor.

The protein localises to the cytoplasm. It catalyses the reaction Endonucleolytic cleavage to 5'-phosphomonoester.. In terms of biological role, endonuclease that specifically degrades the RNA of RNA-DNA hybrids. The sequence is that of Ribonuclease HII from Haemophilus influenzae (strain PittEE).